Here is a 253-residue protein sequence, read N- to C-terminus: MMLLQLNNVSVGTRLASFSSQVTTGLQIHLIGPNGAGKSTLLASLAGLLPASGEIVLAGKSLQHYEGHELARQRAYLSQQQSALSLMPVFQYLSLYQPAGANSQAVATAISYICNKLRLTDKLPRMLSHLSGGEWQRVRLAAVFLQVWPDINPDSKLLLLDEPYSGLDVAQKVALDALLVEFCRSGRSVIISGHDLNHTLQQADEVWLLAQGQVLVQGETQQVMRADVLSQVFEVDFQIHNFNKQQWITTRSV.

The region spanning 4–236 is the ABC transporter domain; the sequence is LQLNNVSVGT…DVLSQVFEVD (233 aa). 32 to 39 provides a ligand contact to ATP; the sequence is GPNGAGKS.

The protein belongs to the ABC transporter superfamily. Vitamin B12 importer (TC 3.A.1.13.1) family. As to quaternary structure, the complex is composed of two ATP-binding proteins (BtuD), two transmembrane proteins (BtuC) and a solute-binding protein (BtuF).

It localises to the cell inner membrane. It catalyses the reaction an R-cob(III)alamin(out) + ATP + H2O = an R-cob(III)alamin(in) + ADP + phosphate + H(+). Its function is as follows. Part of the ABC transporter complex BtuCDF involved in vitamin B12 import. Responsible for energy coupling to the transport system. In Yersinia pestis, this protein is Vitamin B12 import ATP-binding protein BtuD.